The following is a 515-amino-acid chain: Maturase K (515 aa).

Belongs to the intron maturase 2 family. MatK subfamily.

It is found in the plastid. It localises to the chloroplast. Functionally, usually encoded in the trnK tRNA gene intron. Probably assists in splicing its own and other chloroplast group II introns. The sequence is that of Maturase K from Ceratophyllum demersum (Rigid hornwort).